Reading from the N-terminus, the 188-residue chain is MSIKSDKWIRRMAQEHGMIEPFVERQVRGEGADRVISFGVSSYGYDVRCADEFKVFTNINSATVDPKNFDEKSFVDIKSDVCIIPPNSFALARTVEYFRIPRNVLTICLGKSTYARCGIIVNVTPLEPEWEGHVTLEFSNTTTLPAKIYANEGVAQMLFLESDEECEVSYKDRGGKYQGQRGVTLPRT.

DCTP-binding positions include 111 to 116 (KSTYAR), 135 to 137 (TLE), glutamine 156, tyrosine 170, and glutamine 180. Glutamate 137 acts as the Proton donor/acceptor in catalysis.

Belongs to the dCTP deaminase family. Homotrimer.

It catalyses the reaction dCTP + H2O + H(+) = dUTP + NH4(+). Its pathway is pyrimidine metabolism; dUMP biosynthesis; dUMP from dCTP (dUTP route): step 1/2. Catalyzes the deamination of dCTP to dUTP. This Pseudomonas savastanoi pv. phaseolicola (strain 1448A / Race 6) (Pseudomonas syringae pv. phaseolicola (strain 1448A / Race 6)) protein is dCTP deaminase.